The following is an 82-amino-acid chain: Sulfur carrier protein TusA (82 aa).

Cys17 acts as the Cysteine persulfide intermediate in catalysis.

It belongs to the sulfur carrier protein TusA family.

The protein resides in the cytoplasm. Sulfur carrier protein which probably makes part of a sulfur-relay system. The polypeptide is Sulfur carrier protein TusA (Glaesserella parasuis serovar 5 (strain SH0165) (Haemophilus parasuis)).